The following is a 408-amino-acid chain: Neutral cholesterol ester hydrolase 1 (408 aa).

The Cytoplasmic segment spans residues 1-4 (MRSS). The chain crosses the membrane as a helical; Signal-anchor for type II membrane protein span at residues 5 to 25 (CVLLTALVALAAYYVYIPLPG). At 26 to 408 (SVSDPWKLML…SYIKWLDQNL (383 aa)) the chain is on the lumenal side. The short motif at 113–115 (HGG) is the Involved in the stabilization of the negatively charged intermediate by the formation of the oxyanion hole element. Ser191 is an active-site residue. Residues Asn270 and Asn287 are each glycosylated (N-linked (GlcNAc...) asparagine). Catalysis depends on residues Asp348 and His378. N-linked (GlcNAc...) asparagine glycosylation occurs at Asn389.

It belongs to the 'GDXG' lipolytic enzyme family. N-glycosylated.

The protein localises to the cell membrane. The protein resides in the microsome. The catalysed reaction is a 1-O-alkyl-2-acetyl-sn-glycerol + H2O = a 1-O-alkyl-sn-glycerol + acetate + H(+). It catalyses the reaction 1-O-hexadecyl-2-acetyl-sn-glycerol + H2O = 1-O-hexadecyl-sn-glycerol + acetate + H(+). The enzyme catalyses a cholesterol ester + H2O = cholesterol + a fatty acid + H(+). It carries out the reaction cholesteryl (9Z-octadecenoate) + H2O = cholesterol + (9Z)-octadecenoate + H(+). In terms of biological role, hydrolyzes 2-acetyl monoalkylglycerol ether (1-O-alkyl-2-acetyl-sn-glycerol), the penultimate precursor of the pathway for de novo synthesis of platelet-activating factor. May be responsible for the hydrolysis of cholesterol esters (such as cholesteryl (9Z-octadecenoate)) in macrophages. Also involved in organ detoxification by hydrolyzing exogenous organophosphorus compounds. This chain is Neutral cholesterol ester hydrolase 1 (NCEH1), found in Pongo abelii (Sumatran orangutan).